A 339-amino-acid chain; its full sequence is Probable cytosolic iron-sulfur protein assembly protein CIAO1 (339 aa).

WD repeat units follow at residues 14–53, 59–98, 103–142, 148–187, 192–231, 250–289, and 301–339; these read HPDS…WICK, GHQR…FECV, GHEN…EYEC, SHTQ…WVCC, GHES…NEQG, FHTR…DPQQ, and AHSQ…PAGL. The LYR motif; required for interaction with HSC20 signature appears at 176–178; sequence LYQ.

It belongs to the WD repeat CIA1 family. Component of the CIA complex. Interacts with CIAO2A and forms a complex with CIAO2B and MMS19; the interactions with CIAO2A and CIAO2B are mutually exclusive. Interacts with CHD1L, ERCC2, IREB2 and POLD1. Component of the MMXD complex, which includes CIAO1, ERCC2, CIAO2B, MMS19 and SLC25A5. Interacts with WT1. Interacts with CIAO3. Interacts (via LYR motif) with HSC20.

Its subcellular location is the cytoplasm. Its function is as follows. Key component of the cytosolic iron-sulfur protein assembly (CIA) complex, a multiprotein complex that mediates the incorporation of iron-sulfur cluster into extramitochondrial Fe/S proteins. As a CIA complex component, interacts specifically with CIAO2A or CIAO2B and MMS19 to assist different branches of iron-sulfur protein assembly, depending of its interactors. The complex CIAO1:CIAO2B:MMS19 binds to and facilitates the assembly of most cytosolic-nuclear Fe/S proteins. CIAO1:CIAO2A specifically matures ACO1 and stabilizes IREB2. Seems to specifically modulate the transactivation activity of WT1. As part of the mitotic spindle-associated MMXD complex it may play a role in chromosome segregation. The sequence is that of Probable cytosolic iron-sulfur protein assembly protein CIAO1 from Rattus norvegicus (Rat).